Consider the following 192-residue polypeptide: UPF0301 protein BceJ2315_30870 (192 aa).

The protein belongs to the UPF0301 (AlgH) family.

The chain is UPF0301 protein BceJ2315_30870 from Burkholderia cenocepacia (strain ATCC BAA-245 / DSM 16553 / LMG 16656 / NCTC 13227 / J2315 / CF5610) (Burkholderia cepacia (strain J2315)).